Reading from the N-terminus, the 133-residue chain is Small ribosomal subunit protein uS9 (133 aa).

Positions 101 to 133 (MKPKGLLTRDPREVERKKYGLKKARRAPQFSKR) are disordered. The segment covering 107-118 (LTRDPREVERKK) has biased composition (basic and acidic residues). Positions 119 to 133 (YGLKKARRAPQFSKR) are enriched in basic residues.

The protein belongs to the universal ribosomal protein uS9 family.

The sequence is that of Small ribosomal subunit protein uS9 from Deinococcus radiodurans (strain ATCC 13939 / DSM 20539 / JCM 16871 / CCUG 27074 / LMG 4051 / NBRC 15346 / NCIMB 9279 / VKM B-1422 / R1).